Consider the following 167-residue polypeptide: Ribosome maturation factor RimM (167 aa).

The PRC barrel domain maps to 92-166; that stretch reads DGVYYYRELL…EVRVELMEGL (75 aa).

It belongs to the RimM family. As to quaternary structure, binds ribosomal protein uS19.

Its subcellular location is the cytoplasm. Its function is as follows. An accessory protein needed during the final step in the assembly of 30S ribosomal subunit, possibly for assembly of the head region. Essential for efficient processing of 16S rRNA. May be needed both before and after RbfA during the maturation of 16S rRNA. It has affinity for free ribosomal 30S subunits but not for 70S ribosomes. This is Ribosome maturation factor RimM from Lactobacillus delbrueckii subsp. bulgaricus (strain ATCC 11842 / DSM 20081 / BCRC 10696 / JCM 1002 / NBRC 13953 / NCIMB 11778 / NCTC 12712 / WDCM 00102 / Lb 14).